Consider the following 585-residue polypeptide: MEEVFRFYSNSRNIFIHKSLSLKPSTIDDPKSGYGLFVEPSKFKNDELKSETIQLLRIPKRCTFNINTLLALLGDEDEFSSKEEFQRTNDKIKIALREIMAHPNFSVFLTETNLLIIYFMIFQTIRSRYEIPENIQYYLENVLMSIEVETAMDSIENLATDYGHYPQIFGLRETLNLFKELFHDVLNLSDIKHLYSAIISRCLEIPERADTKSEEFTVHSTLVPIVDFANHEGTQKNAYFDIDPSNNDVLLLLDTKAVQSELTKPIEVFISYSPTEDLFSMLVTYGFTPDFRGNSQFWTVSFDRCFLRNYDGPDKTTNLRLFYKWMHINPVVPLVKYEHNGKTRWFLNDTTPEFDMLLLPFIPSIDDGKIARWAYDSTCHLMFTKIHCLINPEANEHALMIAENYRSLIKEKESNGDDFINLPPLAWSLRYKDTENDCVRQRHICSEDAVAVLKQEEMQDSTKTKSQFTSFFRKFLEFRRSKIIRPTSDSKVASILYQQELEIIADLAKAIDSSSTIFFSDLNVTLDTEPERLPPLRFLDDYIEISADKQEPSPICEDLSYYTPSRFTDFFQEEVSQYAAFFQDD.

Residues 18–273 form the SET domain; that stretch reads KSLSLKPSTI…KPIEVFISYS (256 aa). Positions 186–288 are SET-like; the sequence is LNLSDIKHLY…FSMLVTYGFT (103 aa).

Belongs to the class V-like SAM-binding methyltransferase superfamily.

The protein resides in the cytoplasm. It localises to the cytosol. It carries out the reaction L-lysyl-[cytochrome c] + S-adenosyl-L-methionine = N(6)-methyl-L-lysyl-[cytochrome c] + S-adenosyl-L-homocysteine + H(+). Methyltransferase which mediates trimethylation of 'Lys-78' of cytochrome c (CYC1). The protein is Cytochrome c lysine N-methyltransferase 1 (CTM1) of Saccharomyces cerevisiae (strain ATCC 204508 / S288c) (Baker's yeast).